A 427-amino-acid polypeptide reads, in one-letter code: MSAWRAPEVGSRLGRRVLWCLLWLLAGVALGYVAWRLFGHTPYRIDIDIYQMGARAWLDGRPLYGGGVLFHTPIGLNLPFTYPPLAAVLFSPFAWLQMPAASVAITVLTLVLLIASTAIVLTGLDAWPTSRLVPAPARLRRLWLAVLIVAPATIWLEPISSNFAFGQINVVLMTLVIVDCFPRRTPWPRGLMLGLGIALKLTPAVFLLYFLLRRDGRAALTALASFAVATLLGFVLAWRDSWEYWTHTLHHTDRIGAAALNTDQNIAGALARLTIGDDERFALWVAGSLLVLAATIWAMRRVLRAGEPTLAVICVALFGLVVSPVSWSHHWVWMLPAVLVIGLLGWRRRNVALAMLSLAGVVLMRWTPIDLLPQHRETTAVWWRQLAGMSYVWWALAVIVVAGLTVTARMTPQRSLTRGLTPAPTAS.

10 consecutive transmembrane segments (helical) span residues 18–38 (LWCL…WRLF), 101–121 (ASVA…AIVL), 143–163 (WLAV…SSNF), 191–211 (LMLG…LYFL), 218–238 (AALT…VLAW), 279–299 (ERFA…IWAM), 308–328 (PTLA…VSWS), 331–346 (WVWM…LLGW), 351–371 (VALA…PIDL), and 386–406 (LAGM…GLTV).

The protein belongs to the glycosyltransferase 87 family.

It localises to the cell membrane. It participates in phospholipid metabolism; phosphatidylinositol metabolism. In terms of biological role, responsible for the addition of alpha-(1-2) mannose branches to the linear mannan core on the biosynthetic pathway to mature lipoarabinomannan (LAM). The chain is Polyprenol-phosphate-mannose-dependent alpha-(1-2)-phosphatidylinositol mannoside mannosyltransferase from Mycobacterium tuberculosis (strain ATCC 25618 / H37Rv).